We begin with the raw amino-acid sequence, 495 residues long: GTPase Der (495 aa).

2 EngA-type G domains span residues 3-166 (PVIA…MDAE) and 208-381 (IKLA…DCST). Residues 9–16 (GRPNVGKS), 56–60 (DTGGI), 118–121 (NKTD), 214–221 (GRPNVGKS), 261–265 (DTAGV), and 326–329 (NKWD) contribute to the GTP site. The KH-like domain maps to 382-466 (KRVGTSLLTR…PIRIQFKEGE (85 aa)).

Belongs to the TRAFAC class TrmE-Era-EngA-EngB-Septin-like GTPase superfamily. EngA (Der) GTPase family. Associates with the 50S ribosomal subunit.

GTPase that plays an essential role in the late steps of ribosome biogenesis. This Yersinia pseudotuberculosis serotype O:3 (strain YPIII) protein is GTPase Der.